We begin with the raw amino-acid sequence, 30 residues long: uncharacterized protein (30 aa).

This is an uncharacterized protein from Dictyostelium discoideum (Social amoeba).